A 161-amino-acid chain; its full sequence is N5-carboxyaminoimidazole ribonucleotide mutase (161 aa).

Substrate-binding residues include S9, D12, and R39.

The protein belongs to the AIR carboxylase family. Class I subfamily.

It carries out the reaction 5-carboxyamino-1-(5-phospho-D-ribosyl)imidazole + H(+) = 5-amino-1-(5-phospho-D-ribosyl)imidazole-4-carboxylate. Its pathway is purine metabolism; IMP biosynthesis via de novo pathway; 5-amino-1-(5-phospho-D-ribosyl)imidazole-4-carboxylate from 5-amino-1-(5-phospho-D-ribosyl)imidazole (N5-CAIR route): step 2/2. Its function is as follows. Catalyzes the conversion of N5-carboxyaminoimidazole ribonucleotide (N5-CAIR) to 4-carboxy-5-aminoimidazole ribonucleotide (CAIR). This chain is N5-carboxyaminoimidazole ribonucleotide mutase, found in Vibrio vulnificus (strain CMCP6).